The primary structure comprises 108 residues: Phosphoribosyl-AMP cyclohydrolase (108 aa).

Residue aspartate 78 participates in Mg(2+) binding. A Zn(2+)-binding site is contributed by cysteine 79. Mg(2+) contacts are provided by aspartate 80 and aspartate 82. The Zn(2+) site is built by cysteine 95 and cysteine 102.

This sequence belongs to the PRA-CH family. In terms of assembly, homodimer. Requires Mg(2+) as cofactor. It depends on Zn(2+) as a cofactor.

It localises to the cytoplasm. The catalysed reaction is 1-(5-phospho-beta-D-ribosyl)-5'-AMP + H2O = 1-(5-phospho-beta-D-ribosyl)-5-[(5-phospho-beta-D-ribosylamino)methylideneamino]imidazole-4-carboxamide. The protein operates within amino-acid biosynthesis; L-histidine biosynthesis; L-histidine from 5-phospho-alpha-D-ribose 1-diphosphate: step 3/9. In terms of biological role, catalyzes the hydrolysis of the adenine ring of phosphoribosyl-AMP. The chain is Phosphoribosyl-AMP cyclohydrolase from Nitrosopumilus maritimus (strain SCM1).